We begin with the raw amino-acid sequence, 323 residues long: Methionyl-tRNA formyltransferase (323 aa).

115–118 (SLLP) lines the (6S)-5,6,7,8-tetrahydrofolate pocket.

The protein belongs to the Fmt family.

The enzyme catalyses L-methionyl-tRNA(fMet) + (6R)-10-formyltetrahydrofolate = N-formyl-L-methionyl-tRNA(fMet) + (6S)-5,6,7,8-tetrahydrofolate + H(+). In terms of biological role, attaches a formyl group to the free amino group of methionyl-tRNA(fMet). The formyl group appears to play a dual role in the initiator identity of N-formylmethionyl-tRNA by promoting its recognition by IF2 and preventing the misappropriation of this tRNA by the elongation apparatus. This Lactococcus lactis subsp. cremoris (strain SK11) protein is Methionyl-tRNA formyltransferase.